The following is a 229-amino-acid chain: UPF0488 protein C8orf33 (229 aa).

Residues 1 to 16 (MAALGHLAGEAAAAPG) are compositionally biased toward low complexity. A disordered region spans residues 1 to 96 (MAALGHLAGE…GEKASEKLAP (96 aa)). Ala-2 bears the N-acetylalanine mark. Residue Arg-27 is modified to Omega-N-methylarginine. Positions 69 to 79 (KKQKNKKKTRN) are enriched in basic residues. Ser-82 carries the phosphoserine modification.

This sequence belongs to the UPF0488 family.

This Homo sapiens (Human) protein is UPF0488 protein C8orf33 (C8orf33).